A 470-amino-acid chain; its full sequence is tRNA(Ile)-lysidine synthase (470 aa).

Residue 32 to 37 participates in ATP binding; sequence SGGVDS.

Belongs to the tRNA(Ile)-lysidine synthase family.

It is found in the cytoplasm. The catalysed reaction is cytidine(34) in tRNA(Ile2) + L-lysine + ATP = lysidine(34) in tRNA(Ile2) + AMP + diphosphate + H(+). In terms of biological role, ligates lysine onto the cytidine present at position 34 of the AUA codon-specific tRNA(Ile) that contains the anticodon CAU, in an ATP-dependent manner. Cytidine is converted to lysidine, thus changing the amino acid specificity of the tRNA from methionine to isoleucine. This Shewanella woodyi (strain ATCC 51908 / MS32) protein is tRNA(Ile)-lysidine synthase.